The sequence spans 90 residues: UPF0223 protein lwe1035 (90 aa).

This sequence belongs to the UPF0223 family.

The chain is UPF0223 protein lwe1035 from Listeria welshimeri serovar 6b (strain ATCC 35897 / DSM 20650 / CCUG 15529 / CIP 8149 / NCTC 11857 / SLCC 5334 / V8).